A 431-amino-acid polypeptide reads, in one-letter code: Glutamate-1-semialdehyde 2,1-aminomutase (431 aa).

Lys-269 carries the post-translational modification N6-(pyridoxal phosphate)lysine.

This sequence belongs to the class-III pyridoxal-phosphate-dependent aminotransferase family. HemL subfamily. Homodimer. It depends on pyridoxal 5'-phosphate as a cofactor.

Its subcellular location is the cytoplasm. It catalyses the reaction (S)-4-amino-5-oxopentanoate = 5-aminolevulinate. It participates in porphyrin-containing compound metabolism; protoporphyrin-IX biosynthesis; 5-aminolevulinate from L-glutamyl-tRNA(Glu): step 2/2. The polypeptide is Glutamate-1-semialdehyde 2,1-aminomutase (Francisella tularensis subsp. holarctica (strain LVS)).